The sequence spans 66 residues: Large ribosomal subunit protein bL35 (66 aa).

This sequence belongs to the bacterial ribosomal protein bL35 family.

The protein is Large ribosomal subunit protein bL35 of Borrelia garinii subsp. bavariensis (strain ATCC BAA-2496 / DSM 23469 / PBi) (Borreliella bavariensis).